The primary structure comprises 304 residues: Putative F-box/LRR-repeat protein 21 (304 aa).

The region spanning 43–90 is the F-box domain; sequence RRNWVDLPPELTTSILLRLSLTDILDNAQKVCKEWRRICKDPSMWRKI. 4 LRR repeats span residues 132–159, 173–198, 218–241, and 243–268; these read LSYI…GVVN, THSC…KLNS, GPLE…HLQL, and ANRL…DVRK.

In Arabidopsis thaliana (Mouse-ear cress), this protein is Putative F-box/LRR-repeat protein 21 (FBL21).